The sequence spans 261 residues: Cytochrome c oxidase subunit 3 (261 aa).

The Mitochondrial matrix portion of the chain corresponds to Met1–Pro15. The helical transmembrane segment at Trp16 to Trp34 threads the bilayer. The Mitochondrial intermembrane segment spans residues Phe35 to Met40. The chain crosses the membrane as a helical span at residues Thr41–Thr66. At Phe67–Thr72 the chain is on the mitochondrial matrix side. Residues Ser73–Ser105 traverse the membrane as a helical segment. The Mitochondrial intermembrane portion of the chain corresponds to Leu106–Glu128. A helical transmembrane segment spans residues Val129 to Met152. Over Glu153 to Asn155 the chain is Mitochondrial matrix. The chain crosses the membrane as a helical span at residues Arg156 to Glu183. The Mitochondrial intermembrane segment spans residues Ala184–Asp190. The chain crosses the membrane as a helical span at residues Gly191–Leu223. Over Lys224 to His232 the chain is Mitochondrial matrix. The chain crosses the membrane as a helical span at residues Phe233 to Ile256. At Tyr257–Ser261 the chain is on the mitochondrial intermembrane side.

It belongs to the cytochrome c oxidase subunit 3 family. In terms of assembly, component of the cytochrome c oxidase (complex IV, CIV), a multisubunit enzyme composed of 14 subunits. The complex is composed of a catalytic core of 3 subunits MT-CO1, MT-CO2 and MT-CO3, encoded in the mitochondrial DNA, and 11 supernumerary subunits COX4I, COX5A, COX5B, COX6A, COX6B, COX6C, COX7A, COX7B, COX7C, COX8 and NDUFA4, which are encoded in the nuclear genome. The complex exists as a monomer or a dimer and forms supercomplexes (SCs) in the inner mitochondrial membrane with NADH-ubiquinone oxidoreductase (complex I, CI) and ubiquinol-cytochrome c oxidoreductase (cytochrome b-c1 complex, complex III, CIII), resulting in different assemblies (supercomplex SCI(1)III(2)IV(1) and megacomplex MCI(2)III(2)IV(2)).

It localises to the mitochondrion inner membrane. The enzyme catalyses 4 Fe(II)-[cytochrome c] + O2 + 8 H(+)(in) = 4 Fe(III)-[cytochrome c] + 2 H2O + 4 H(+)(out). Its function is as follows. Component of the cytochrome c oxidase, the last enzyme in the mitochondrial electron transport chain which drives oxidative phosphorylation. The respiratory chain contains 3 multisubunit complexes succinate dehydrogenase (complex II, CII), ubiquinol-cytochrome c oxidoreductase (cytochrome b-c1 complex, complex III, CIII) and cytochrome c oxidase (complex IV, CIV), that cooperate to transfer electrons derived from NADH and succinate to molecular oxygen, creating an electrochemical gradient over the inner membrane that drives transmembrane transport and the ATP synthase. Cytochrome c oxidase is the component of the respiratory chain that catalyzes the reduction of oxygen to water. Electrons originating from reduced cytochrome c in the intermembrane space (IMS) are transferred via the dinuclear copper A center (CU(A)) of subunit 2 and heme A of subunit 1 to the active site in subunit 1, a binuclear center (BNC) formed by heme A3 and copper B (CU(B)). The BNC reduces molecular oxygen to 2 water molecules using 4 electrons from cytochrome c in the IMS and 4 protons from the mitochondrial matrix. This is Cytochrome c oxidase subunit 3 (MT-CO3) from Damaliscus lunatus (Tsessebe).